The chain runs to 461 residues: tRNA modification GTPase MnmE (461 aa).

(6S)-5-formyl-5,6,7,8-tetrahydrofolate contacts are provided by Arg23, Glu88, and Arg127. One can recognise a TrmE-type G domain in the interval 223–382; that stretch reads GLNTVIVGKP…VEEALVEIVY (160 aa). Position 233 (Asn233) interacts with K(+). GTP-binding positions include 233–238, 252–258, and 277–280; these read NVGKSS, TEVPGTT, and DTAG. Ser237 contributes to the Mg(2+) binding site. Residues Thr252, Val254, and Thr257 each contribute to the K(+) site. A Mg(2+)-binding site is contributed by Thr258. Lys461 is a (6S)-5-formyl-5,6,7,8-tetrahydrofolate binding site.

This sequence belongs to the TRAFAC class TrmE-Era-EngA-EngB-Septin-like GTPase superfamily. TrmE GTPase family. In terms of assembly, homodimer. Heterotetramer of two MnmE and two MnmG subunits. Requires K(+) as cofactor.

The protein localises to the cytoplasm. Its function is as follows. Exhibits a very high intrinsic GTPase hydrolysis rate. Involved in the addition of a carboxymethylaminomethyl (cmnm) group at the wobble position (U34) of certain tRNAs, forming tRNA-cmnm(5)s(2)U34. The protein is tRNA modification GTPase MnmE of Alkaliphilus metalliredigens (strain QYMF).